A 1477-amino-acid polypeptide reads, in one-letter code: FHA domain-containing protein PS1 (1477 aa).

The FHA domain occupies 64–115 (LVVGRHPDCDILLTHPSISRFHLEIRSISSRQKLFVTDLSSVHGTWVRDLRI). 7 disordered regions span residues 188-218 (ENTT…DEDT), 588-644 (LGKA…PKSF), 789-818 (PNSF…DSEF), 832-911 (LNQK…LIGS), 942-979 (ALAA…RDDV), 1004-1030 (IRTN…KQAL), and 1159-1225 (VEQE…IRSS). The segment covering 589–607 (GKADIRSHEENGESEDSRQ) has biased composition (basic and acidic residues). The segment covering 832–849 (LNQKRNGETKVSSRQASP) has biased composition (polar residues). Residues 870-883 (QSLCSSSQPPSESE) are compositionally biased toward low complexity. 4 stretches are compositionally biased toward polar residues: residues 885–897 (NPAT…SGII), 957–971 (LSSS…QTPE), 1007–1018 (NKSQGKQKQTGR), and 1198–1212 (SSFQ…SSTA). Positions 1213–1225 (SARNNISRGIRSS) are enriched in low complexity.

Required for normal spindle orientation at male meiosis II and normal formation of tetrad of microspores. Not involved in female meiosis. The chain is FHA domain-containing protein PS1 from Arabidopsis thaliana (Mouse-ear cress).